The sequence spans 604 residues: Kelch-like protein 15 (604 aa).

A BTB domain is found at 31 to 98 (LDVTLLIEEH…MYYGSLELSM (68 aa)). In terms of domain architecture, BACK spans 133 to 237 (CAEVMRLLED…TPANIFEKVK (105 aa)). Kelch repeat units follow at residues 328–379 (FAFL…VIGK), 381–426 (IYAV…VLNG), 428–473 (LYIT…NKSK), 489–542 (KLYV…VLDK), and 544–592 (IMVL…SLHF).

Its subcellular location is the nucleus. It functions in the pathway protein modification; protein ubiquitination. In terms of biological role, substrate-specific adapter for an E3 ubiquitin-protein ligase complex. The polypeptide is Kelch-like protein 15 (klhl15) (Danio rerio (Zebrafish)).